A 505-amino-acid chain; its full sequence is ATP synthase subunit beta (505 aa).

157-164 is an ATP binding site; the sequence is GGAGVGKT.

It belongs to the ATPase alpha/beta chains family. F-type ATPases have 2 components, CF(1) - the catalytic core - and CF(0) - the membrane proton channel. CF(1) has five subunits: alpha(3), beta(3), gamma(1), delta(1), epsilon(1). CF(0) has three main subunits: a(1), b(2) and c(9-12). The alpha and beta chains form an alternating ring which encloses part of the gamma chain. CF(1) is attached to CF(0) by a central stalk formed by the gamma and epsilon chains, while a peripheral stalk is formed by the delta and b chains.

The protein resides in the cell inner membrane. It catalyses the reaction ATP + H2O + 4 H(+)(in) = ADP + phosphate + 5 H(+)(out). Its function is as follows. Produces ATP from ADP in the presence of a proton gradient across the membrane. The catalytic sites are hosted primarily by the beta subunits. This is ATP synthase subunit beta from Bacteroides fragilis (strain ATCC 25285 / DSM 2151 / CCUG 4856 / JCM 11019 / LMG 10263 / NCTC 9343 / Onslow / VPI 2553 / EN-2).